The primary structure comprises 356 residues: Tyrosine recombinase XerS (356 aa).

The Core-binding (CB) domain maps to 16–121; that stretch reads IMPSYVLEYY…ALSSLYKYLT (106 aa). The Tyr recombinase domain occupies 169-354; the sequence is GFLDYIDNEY…INEEQKNALD (186 aa). Residues R210, K234, H306, R309, and H332 contribute to the active site. Y341 serves as the catalytic O-(3'-phospho-DNA)-tyrosine intermediate.

The protein belongs to the 'phage' integrase family. XerS subfamily.

It localises to the cytoplasm. With respect to regulation, ftsK is required for recombination. In terms of biological role, site-specific tyrosine recombinase, which acts by catalyzing the cutting and rejoining of the recombining DNA molecules. Essential to convert dimers of the bacterial chromosome into monomers to permit their segregation at cell division. This chain is Tyrosine recombinase XerS, found in Lactococcus lactis subsp. lactis (strain IL1403) (Streptococcus lactis).